A 557-amino-acid polypeptide reads, in one-letter code: Dihydroxy-acid dehydratase (557 aa).

Residue Asp-78 coordinates Mg(2+). Cys-119 is a binding site for [2Fe-2S] cluster. Positions 120 and 121 each coordinate Mg(2+). Lys-121 bears the N6-carboxylysine mark. [2Fe-2S] cluster is bound at residue Cys-192. Glu-446 serves as a coordination point for Mg(2+). Residue Ser-472 is the Proton acceptor of the active site.

The protein belongs to the IlvD/Edd family. As to quaternary structure, homodimer. [2Fe-2S] cluster serves as cofactor. It depends on Mg(2+) as a cofactor.

It catalyses the reaction (2R)-2,3-dihydroxy-3-methylbutanoate = 3-methyl-2-oxobutanoate + H2O. It carries out the reaction (2R,3R)-2,3-dihydroxy-3-methylpentanoate = (S)-3-methyl-2-oxopentanoate + H2O. It participates in amino-acid biosynthesis; L-isoleucine biosynthesis; L-isoleucine from 2-oxobutanoate: step 3/4. It functions in the pathway amino-acid biosynthesis; L-valine biosynthesis; L-valine from pyruvate: step 3/4. Its function is as follows. Functions in the biosynthesis of branched-chain amino acids. Catalyzes the dehydration of (2R,3R)-2,3-dihydroxy-3-methylpentanoate (2,3-dihydroxy-3-methylvalerate) into 2-oxo-3-methylpentanoate (2-oxo-3-methylvalerate) and of (2R)-2,3-dihydroxy-3-methylbutanoate (2,3-dihydroxyisovalerate) into 2-oxo-3-methylbutanoate (2-oxoisovalerate), the penultimate precursor to L-isoleucine and L-valine, respectively. The protein is Dihydroxy-acid dehydratase of Campylobacter curvus (strain 525.92).